The sequence spans 106 residues: Large ribosomal subunit protein eL30 (106 aa).

The protein belongs to the eukaryotic ribosomal protein eL30 family.

In Sulfurisphaera tokodaii (strain DSM 16993 / JCM 10545 / NBRC 100140 / 7) (Sulfolobus tokodaii), this protein is Large ribosomal subunit protein eL30 (rpl30e).